The sequence spans 502 residues: Peroxisomal catalase (502 aa).

Active-site residues include histidine 64 and asparagine 137. Tyrosine 347 contacts heme. The Microbody targeting signal signature appears at 500 to 502; the sequence is AKM.

This sequence belongs to the catalase family. Heme is required as a cofactor.

Its subcellular location is the peroxisome matrix. The enzyme catalyses 2 H2O2 = O2 + 2 H2O. Its function is as follows. Catalyzes the degradation of hydrogen peroxide (H(2)O(2)) generated by peroxisomal oxidases to water and oxygen, thereby protecting cells from the toxic effects of hydrogen peroxide. The polypeptide is Peroxisomal catalase (Toxoplasma gondii).